A 209-amino-acid chain; its full sequence is Small ribosomal subunit protein uS3c (209 aa).

Residues 39–109 (IRSCIEKQLH…QIRINLIEIT (71 aa)) enclose the KH type-2 domain.

This sequence belongs to the universal ribosomal protein uS3 family. In terms of assembly, part of the 30S ribosomal subunit.

The protein localises to the plastid. The protein resides in the chloroplast. This chain is Small ribosomal subunit protein uS3c (rps3), found in Gracilaria tenuistipitata (Red alga).